The following is a 157-amino-acid chain: uncharacterized protein (157 aa).

This is an uncharacterized protein from Bacillus subtilis (strain 168).